The primary structure comprises 151 residues: MTFRKTSLVLLLLLSIDCIVKSEITSAQTPRCLAANNSFPRSVMVTLSIRNWNTSSKRASDYYNRSTSPWTLYRNEDQDRYPSVIWEAKCRYLGCVNADGNVDYHMNSVPIQQEILVVRKGHNPCPNSFRLEKMLVTVGCTCVTPIVHNVD.

The N-terminal stretch at Met1 to Ser22 is a signal peptide. N-linked (GlcNAc...) asparagine; by host glycosylation is found at Asn36, Asn53, and Asn64. Cystine bridges form between Cys90–Cys140 and Cys95–Cys142.

Belongs to the IL-17 family.

It is found in the secreted. The protein is Viral interleukin-17 (13) of Saimiri sciureus (Common squirrel monkey).